A 323-amino-acid polypeptide reads, in one-letter code: uncharacterized protein (323 aa).

The segment at 1-21 (MGSYYSTESTKSNESNETTNN) is disordered. The N-myristoyl glycine; by host moiety is linked to residue G2.

This is an uncharacterized protein from Acanthamoeba polyphaga (Amoeba).